The sequence spans 234 residues: R-spondin-4 (234 aa).

A signal peptide spans 1–19 (MRAPLCLLLLVAHAVDMLA). An N-linked (GlcNAc...) asparagine glycan is attached at Asn34. Intrachain disulfides connect Cys35-Cys41, Cys38-Cys47, Cys50-Cys69, Cys73-Cys88, Cys91-Cys98, Cys95-Cys104, Cys107-Cys118, Cys122-Cys135, Cys139-Cys181, Cys150-Cys157, and Cys190-Cys196. The FU repeat unit spans residues 85-128 (VNRCKKCGATCESCFSQDFCIRCKRQFYLYKGKCLPTCPPGTLA). In terms of domain architecture, TSP type-1 spans 138 to 197 (ECELGPWGGWSPCTHNGKTCGSAWGLESRVREAGRAGHEEAATCQVLSESRKCPIQRPCP). Residues 190–234 (CPIQRPCPGERSPGQKKGRKDRRPRKDRKLDRRLDVRPRQPGLQP) are disordered. The segment covering 203-216 (GQKKGRKDRRPRKD) has biased composition (basic residues). A compositionally biased stretch (basic and acidic residues) spans 217–227 (RKLDRRLDVRP).

It belongs to the R-spondin family. In terms of assembly, binds heparin. Interacts with LGR4, LGR5 and LGR6. Post-translationally, tyr-112 may be phosphorylated; however as this position is probably extracellular, the vivo relevance is not proven.

It localises to the secreted. Activator of the canonical Wnt signaling pathway by acting as a ligand for LGR4-6 receptors. Upon binding to LGR4-6 (LGR4, LGR5 or LGR6), LGR4-6 associate with phosphorylated LRP6 and frizzled receptors that are activated by extracellular Wnt receptors, triggering the canonical Wnt signaling pathway to increase expression of target genes. Also regulates the canonical Wnt/beta-catenin-dependent pathway and non-canonical Wnt signaling by acting as an inhibitor of ZNRF3, an important regulator of the Wnt signaling pathway. This chain is R-spondin-4 (RSPO4), found in Homo sapiens (Human).